A 347-amino-acid chain; its full sequence is Phosphoribosylformylglycinamidine cyclo-ligase (347 aa).

Belongs to the AIR synthase family.

It localises to the cytoplasm. The catalysed reaction is 2-formamido-N(1)-(5-O-phospho-beta-D-ribosyl)acetamidine + ATP = 5-amino-1-(5-phospho-beta-D-ribosyl)imidazole + ADP + phosphate + H(+). The protein operates within purine metabolism; IMP biosynthesis via de novo pathway; 5-amino-1-(5-phospho-D-ribosyl)imidazole from N(2)-formyl-N(1)-(5-phospho-D-ribosyl)glycinamide: step 2/2. The sequence is that of Phosphoribosylformylglycinamidine cyclo-ligase from Yersinia pseudotuberculosis serotype O:1b (strain IP 31758).